Consider the following 288-residue polypeptide: Polyamine aminopropyltransferase (288 aa).

Residues 9–238 (ETLHDQFGQY…GIMTFAWATD (230 aa)) enclose the PABS domain. Residue Gln-33 coordinates S-methyl-5'-thioadenosine. Positions 64 and 88 each coordinate spermidine. Residues Glu-108 and 140-141 (DG) contribute to the S-methyl-5'-thioadenosine site. The active-site Proton acceptor is the Asp-158. Residue 158–161 (DCTD) participates in spermidine binding. Residue Pro-165 coordinates S-methyl-5'-thioadenosine.

This sequence belongs to the spermidine/spermine synthase family. Homodimer or homotetramer.

The protein resides in the cytoplasm. The enzyme catalyses S-adenosyl 3-(methylsulfanyl)propylamine + putrescine = S-methyl-5'-thioadenosine + spermidine + H(+). Its pathway is amine and polyamine biosynthesis; spermidine biosynthesis; spermidine from putrescine: step 1/1. Catalyzes the irreversible transfer of a propylamine group from the amino donor S-adenosylmethioninamine (decarboxy-AdoMet) to putrescine (1,4-diaminobutane) to yield spermidine. In Escherichia coli O17:K52:H18 (strain UMN026 / ExPEC), this protein is Polyamine aminopropyltransferase.